The primary structure comprises 986 residues: Ephrin type-A receptor 4 (986 aa).

Positions 1 to 19 (MAGIFYFALFSCLFGICDA) are cleaved as a signal peptide. Residues 20 to 547 (VTGSRVYPAN…RIIGDGANST (528 aa)) are Extracellular-facing. Positions 30–209 (EVTLLDSRSV…FYKKCPLTVR (180 aa)) constitute an Eph LBD domain. N-linked (GlcNAc...) asparagine glycans are attached at residues Asn235, Asn340, and Asn408. Fibronectin type-III domains lie at 328 to 439 (PPSA…TNQA) and 440 to 537 (APSS…TVPS). The N-linked (GlcNAc...) asparagine glycan is linked to Asn545. The chain crosses the membrane as a helical span at residues 548 to 569 (VLLVSVSGSVVLVVILIAAFVI). At 570-986 (SRRRSKYSKA…QQMHGRMVPV (417 aa)) the chain is on the cytoplasmic side. 2 positions are modified to phosphotyrosine; by autocatalysis: Tyr596 and Tyr602. Positions 621 to 882 (IKIEKVIGVG…QIVNMLDKLI (262 aa)) constitute a Protein kinase domain. ATP is bound by residues 627–635 (IGVGEFGEV) and Lys653. Catalysis depends on Asp746, which acts as the Proton acceptor. Tyr779 and Tyr928 each carry phosphotyrosine; by autocatalysis. The 65-residue stretch at 911–975 (SAVVSVGDWL…LSSVQAMRTQ (65 aa)) folds into the SAM domain. The short motif at 984 to 986 (VPV) is the PDZ-binding element.

The protein belongs to the protein kinase superfamily. Tyr protein kinase family. Ephrin receptor subfamily. Heterotetramer upon binding of the ligand. The heterotetramer is composed of an ephrin dimer and a receptor dimer. Oligomerization is probably required to induce biological responses. Interacts (phosphorylated at position Tyr-602) with FYN. Interacts with CDK5, CDK5R1 and NGEF; upon activation by EFNA1 induces NGEF phosphorylation by the kinase CDK5. Interacts with CHN1; effector of EPHA4 in axon guidance linking EPHA4 activation to RAC1 regulation. Interacts (via PDZ motif) with SIPA1L1 (via PDZ domain); controls neuronal morphology through regulation of the RAP1 (RAP1A or RAP1B) and RAP2 (RAP2A, RAP2B or RAP2C) GTPases. Forms a ternary complex composed of ADAM10, CADH1 and EPHA4; within the complex, CADH1 is cleaved by ADAM10 which disrupts adherens junctions. Ubiquitous.

The protein resides in the cell membrane. Its subcellular location is the cell projection. It localises to the axon. The protein localises to the dendrite. It is found in the postsynaptic density membrane. The protein resides in the early endosome. Its subcellular location is the cell junction. It localises to the adherens junction. It catalyses the reaction L-tyrosyl-[protein] + ATP = O-phospho-L-tyrosyl-[protein] + ADP + H(+). In terms of biological role, receptor tyrosine kinase which binds membrane-bound ephrin family ligands residing on adjacent cells, leading to contact-dependent bidirectional signaling into neighboring cells. The signaling pathway downstream of the receptor is referred to as forward signaling while the signaling pathway downstream of the ephrin ligand is referred to as reverse signaling. Highly promiscuous, it has the unique property among Eph receptors to bind and to be physiologically activated by both GPI-anchored ephrin-A and transmembrane ephrin-B ligands including EFNA1 and EFNB3. Upon activation by ephrin ligands, modulates cell morphology and integrin-dependent cell adhesion through regulation of the Rac, Rap and Rho GTPases activity. Plays an important role in the development of the nervous system controlling different steps of axonal guidance including the establishment of the corticospinal projections. May also control the segregation of motor and sensory axons during neuromuscular circuit development. In addition to its role in axonal guidance plays a role in synaptic plasticity. Activated by EFNA1 phosphorylates CDK5 at 'Tyr-15' which in turn phosphorylates NGEF regulating RHOA and dendritic spine morphogenesis. In the nervous system, also plays a role in repair after injury preventing axonal regeneration and in angiogenesis playing a role in central nervous system vascular formation. Additionally, its promiscuity makes it available to participate in a variety of cell-cell signaling regulating for instance the development of the thymic epithelium. During development of the cochlear organ of Corti, regulates pillar cell separation by forming a ternary complex with ADAM10 and CADH1 which facilitates the cleavage of CADH1 by ADAM10 and disruption of adherens junctions. Phosphorylates CAPRIN1, promoting CAPRIN1-dependent formation of a membraneless compartment. The chain is Ephrin type-A receptor 4 (EPHA4) from Homo sapiens (Human).